We begin with the raw amino-acid sequence, 433 residues long: Probable D-serine dehydratase (433 aa).

An N6-(pyridoxal phosphate)lysine modification is found at Lys110.

Belongs to the serine/threonine dehydratase family. DsdA subfamily. Pyridoxal 5'-phosphate is required as a cofactor.

The enzyme catalyses D-serine = pyruvate + NH4(+). The sequence is that of Probable D-serine dehydratase from Oenococcus oeni (strain ATCC BAA-331 / PSU-1).